Here is a 270-residue protein sequence, read N- to C-terminus: Ribosomal RNA small subunit methyltransferase A (270 aa).

S-adenosyl-L-methionine is bound by residues Asn16, Leu18, Gly43, Glu64, Asp89, and Asn110.

It belongs to the class I-like SAM-binding methyltransferase superfamily. rRNA adenine N(6)-methyltransferase family. RsmA subfamily.

Its subcellular location is the cytoplasm. The enzyme catalyses adenosine(1518)/adenosine(1519) in 16S rRNA + 4 S-adenosyl-L-methionine = N(6)-dimethyladenosine(1518)/N(6)-dimethyladenosine(1519) in 16S rRNA + 4 S-adenosyl-L-homocysteine + 4 H(+). In terms of biological role, specifically dimethylates two adjacent adenosines (A1518 and A1519) in the loop of a conserved hairpin near the 3'-end of 16S rRNA in the 30S particle. May play a critical role in biogenesis of 30S subunits. This Pseudomonas fluorescens (strain ATCC BAA-477 / NRRL B-23932 / Pf-5) protein is Ribosomal RNA small subunit methyltransferase A.